The chain runs to 178 residues: Nucleoside-triphosphatase THEP1 (178 aa).

Residues 7 to 14 (GEPGVGKT) and 102 to 109 (VIIIDEIG) each bind ATP.

Belongs to the THEP1 NTPase family. In terms of assembly, monomer.

The catalysed reaction is a ribonucleoside 5'-triphosphate + H2O = a ribonucleoside 5'-diphosphate + phosphate + H(+). In terms of biological role, has nucleotide phosphatase activity towards ATP, GTP, CTP, TTP and UTP. May hydrolyze nucleoside diphosphates with lower efficiency. Does not have kinase activity. In Aquifex aeolicus (strain VF5), this protein is Nucleoside-triphosphatase THEP1.